A 657-amino-acid chain; its full sequence is Translation factor GUF1, mitochondrial (657 aa).

The N-terminal 39 residues, 1–39, are a transit peptide targeting the mitochondrion; the sequence is MRGCLQSVKWLTSAVRQSQSLTSSTRFPRRLFNTSTLHY. Positions 59-239 constitute a tr-type G domain; the sequence is ERFRNFCIVA…TVIEQVPAPV (181 aa). GTP contacts are provided by residues 68-75, 132-136, and 186-189; these read AHVDHGKS, DTPGH, and NKVD.

This sequence belongs to the TRAFAC class translation factor GTPase superfamily. Classic translation factor GTPase family. LepA subfamily.

The protein localises to the mitochondrion inner membrane. It carries out the reaction GTP + H2O = GDP + phosphate + H(+). Functionally, promotes mitochondrial protein synthesis. May act as a fidelity factor of the translation reaction, by catalyzing a one-codon backward translocation of tRNAs on improperly translocated ribosomes. Binds to mitochondrial ribosomes in a GTP-dependent manner. The chain is Translation factor GUF1, mitochondrial from Blastomyces gilchristii (strain SLH14081) (Blastomyces dermatitidis).